The following is a 116-amino-acid chain: Fluoride-specific ion channel FluC 2 (116 aa).

Helical transmembrane passes span 3 to 23 (LLTA…RYAV) and 43 to 63 (LLFG…AVTV). Na(+)-binding residues include glycine 67 and threonine 70. A helical membrane pass occupies residues 96 to 116 (VGTLAAALLAVFLGIALGAAL).

The protein belongs to the fluoride channel Fluc/FEX (TC 1.A.43) family.

The protein localises to the cell membrane. The catalysed reaction is fluoride(in) = fluoride(out). Its activity is regulated as follows. Na(+) is not transported, but it plays an essential structural role and its presence is essential for fluoride channel function. In terms of biological role, fluoride-specific ion channel. Important for reducing fluoride concentration in the cell, thus reducing its toxicity. In Natronomonas pharaonis (strain ATCC 35678 / DSM 2160 / CIP 103997 / JCM 8858 / NBRC 14720 / NCIMB 2260 / Gabara) (Halobacterium pharaonis), this protein is Fluoride-specific ion channel FluC 2.